Here is a 369-residue protein sequence, read N- to C-terminus: 3-dehydroquinate synthase (369 aa).

NAD(+) contacts are provided by residues Asp75–Lys80, Gly109–Asp113, Thr133–Thr134, Lys146, Lys155, and Thr173–Thr176. 3 residues coordinate Zn(2+): Glu188, His251, and His268.

It belongs to the sugar phosphate cyclases superfamily. Dehydroquinate synthase family. Requires Co(2+) as cofactor. Zn(2+) serves as cofactor. It depends on NAD(+) as a cofactor.

It localises to the cytoplasm. The catalysed reaction is 7-phospho-2-dehydro-3-deoxy-D-arabino-heptonate = 3-dehydroquinate + phosphate. The protein operates within metabolic intermediate biosynthesis; chorismate biosynthesis; chorismate from D-erythrose 4-phosphate and phosphoenolpyruvate: step 2/7. Functionally, catalyzes the conversion of 3-deoxy-D-arabino-heptulosonate 7-phosphate (DAHP) to dehydroquinate (DHQ). The sequence is that of 3-dehydroquinate synthase from Legionella pneumophila (strain Paris).